A 226-amino-acid polypeptide reads, in one-letter code: Thiopurine S-methyltransferase (226 aa).

Positions 16, 51, 72, and 131 each coordinate S-adenosyl-L-methionine.

Belongs to the class I-like SAM-binding methyltransferase superfamily. TPMT family.

The protein resides in the cytoplasm. It catalyses the reaction S-adenosyl-L-methionine + a thiopurine = S-adenosyl-L-homocysteine + a thiopurine S-methylether.. This chain is Thiopurine S-methyltransferase, found in Francisella tularensis subsp. novicida (strain U112).